A 250-amino-acid polypeptide reads, in one-letter code: tRNA (guanine-N(1)-)-methyltransferase (250 aa).

S-adenosyl-L-methionine contacts are provided by residues Gly115 and 135-140 (LGDFVL).

This sequence belongs to the RNA methyltransferase TrmD family. In terms of assembly, homodimer.

It is found in the cytoplasm. It catalyses the reaction guanosine(37) in tRNA + S-adenosyl-L-methionine = N(1)-methylguanosine(37) in tRNA + S-adenosyl-L-homocysteine + H(+). Its function is as follows. Specifically methylates guanosine-37 in various tRNAs. This Legionella pneumophila (strain Lens) protein is tRNA (guanine-N(1)-)-methyltransferase.